The chain runs to 159 residues: Putative ribosomal RNA large subunit methyltransferase H (159 aa).

Residues Leu-76, Gly-108, and 127-132 (FSKMTF) contribute to the S-adenosyl-L-methionine site.

This sequence belongs to the RNA methyltransferase RlmH family.

It localises to the cytoplasm. The catalysed reaction is pseudouridine(1915) in 23S rRNA + S-adenosyl-L-methionine = N(3)-methylpseudouridine(1915) in 23S rRNA + S-adenosyl-L-homocysteine + H(+). Functionally, specifically methylates the pseudouridine at position 1915 (m3Psi1915) in 23S rRNA. This chain is Putative ribosomal RNA large subunit methyltransferase H, found in Methanococcus maripaludis (strain C7 / ATCC BAA-1331).